The following is a 61-amino-acid chain: Temporin-SN2 (61 aa).

An N-terminal signal peptide occupies residues 1–22; the sequence is MFTLKKTLLLLFFLGTINLSLC. A propeptide spans 23–44 (removed in mature form); that stretch reads EEERNAEEERRDGDDEMDVEVK. The residue at position 61 (lysine 61) is a Lysine amide.

It belongs to the frog skin active peptide (FSAP) family. Temporin subfamily. As to expression, expressed by the skin glands.

Its subcellular location is the secreted. Functionally, antimicrobial peptide. Active against some Gram-positive and Gram-negative bacterial strains. Active against fungus C.glabrata 090902 but not against C.albicans ATCC 12231. Shows very weak hemolytic activity against human erythrocytes. The chain is Temporin-SN2 from Sylvirana spinulosa (Fine-spined frog).